Reading from the N-terminus, the 449-residue chain is 8-oxoguanine deaminase (449 aa).

Zn(2+) contacts are provided by H64 and H66. Q69 is a binding site for substrate. Residue H232 participates in Zn(2+) binding. The substrate site is built by E235 and H269. The Zn(2+) site is built by H269 and D320.

Belongs to the metallo-dependent hydrolases superfamily. ATZ/TRZ family. As to quaternary structure, homodimer. Zn(2+) serves as cofactor.

It catalyses the reaction 8-oxoguanine + H2O + H(+) = urate + NH4(+). It participates in purine metabolism. Functionally, specifically deaminates 8-Oxoguanine (8-oxoG) to uric acid. 8-oxoG is formed via the oxidation of guanine within DNA by reactive oxygen species and leads, if uncorrected, to the incorporation of 8-oxoG:A mismatches and eventually to G:C to T:A transversions. This chain is 8-oxoguanine deaminase, found in Pseudomonas aeruginosa (strain ATCC 15692 / DSM 22644 / CIP 104116 / JCM 14847 / LMG 12228 / 1C / PRS 101 / PAO1).